Reading from the N-terminus, the 167-residue chain is uncharacterized protein (167 aa).

It to A.aeolicus aq_328.

This is an uncharacterized protein from Aquifex aeolicus (strain VF5).